A 331-amino-acid chain; its full sequence is Phosphoribosylformylglycinamidine cyclo-ligase (331 aa).

It belongs to the AIR synthase family.

The protein localises to the cytoplasm. The enzyme catalyses 2-formamido-N(1)-(5-O-phospho-beta-D-ribosyl)acetamidine + ATP = 5-amino-1-(5-phospho-beta-D-ribosyl)imidazole + ADP + phosphate + H(+). The protein operates within purine metabolism; IMP biosynthesis via de novo pathway; 5-amino-1-(5-phospho-D-ribosyl)imidazole from N(2)-formyl-N(1)-(5-phospho-D-ribosyl)glycinamide: step 2/2. This chain is Phosphoribosylformylglycinamidine cyclo-ligase, found in Clostridium kluyveri (strain NBRC 12016).